A 224-amino-acid chain; its full sequence is MVKMNVETREELASLIDHTNVRADATENDIERLCREAVSYGFRCAVVTPTNVRLAAELLEGTDVTVCSVVGFPAGVSTPRVKALEASEAVENGAGEVDMVMNIGAMKSGNRELVYRDISGVVDAAGVPVKVILETAYLTDKEKVEACLISKEAGAAFVKTSTAYGGLAGATVEDVMLMRKTVGDEMGVKASGGIRDLETALAMIDAGADRIGTSTGVQIIEGWR.

Catalysis depends on D98, which acts as the Proton donor/acceptor. K159 (schiff-base intermediate with acetaldehyde) is an active-site residue. K189 functions as the Proton donor/acceptor in the catalytic mechanism.

It belongs to the DeoC/FbaB aldolase family. DeoC type 1 subfamily.

The protein resides in the cytoplasm. It carries out the reaction 2-deoxy-D-ribose 5-phosphate = D-glyceraldehyde 3-phosphate + acetaldehyde. It functions in the pathway carbohydrate degradation; 2-deoxy-D-ribose 1-phosphate degradation; D-glyceraldehyde 3-phosphate and acetaldehyde from 2-deoxy-alpha-D-ribose 1-phosphate: step 2/2. Catalyzes a reversible aldol reaction between acetaldehyde and D-glyceraldehyde 3-phosphate to generate 2-deoxy-D-ribose 5-phosphate. This is Deoxyribose-phosphate aldolase from Methanothermobacter thermautotrophicus (strain ATCC 29096 / DSM 1053 / JCM 10044 / NBRC 100330 / Delta H) (Methanobacterium thermoautotrophicum).